Consider the following 327-residue polypeptide: Phenylalanine--tRNA ligase alpha subunit (327 aa).

Glu253 lines the Mg(2+) pocket.

This sequence belongs to the class-II aminoacyl-tRNA synthetase family. Phe-tRNA synthetase alpha subunit type 1 subfamily. Tetramer of two alpha and two beta subunits. Mg(2+) serves as cofactor.

It is found in the cytoplasm. It catalyses the reaction tRNA(Phe) + L-phenylalanine + ATP = L-phenylalanyl-tRNA(Phe) + AMP + diphosphate + H(+). The protein is Phenylalanine--tRNA ligase alpha subunit of Laribacter hongkongensis (strain HLHK9).